A 359-amino-acid polypeptide reads, in one-letter code: Type-1 angiotensin II receptor A (359 aa).

At 1–25 (MALNSSAEDGIKRIQDDCPKAGRHS) the chain is on the extracellular side. The N-linked (GlcNAc...) asparagine glycan is linked to N4. Positions 15 and 17 each coordinate angiotensin II. 2 disulfide bridges follow: C18–C274 and C101–C180. A helical transmembrane segment spans residues 26 to 55 (YIFVMIPTLYSIIFVVGIFGNSLVVIVIYF). The Cytoplasmic portion of the chain corresponds to 56–61 (YMKLKT). A helical transmembrane segment spans residues 62-89 (VASVFLLNLALADLCFLLTLPLWAVYTA). Residues 90–98 (MEYRWPFGN) lie on the Extracellular side of the membrane. Residues 99-125 (HLCKIASASVSFNLYASVFLLTCLSID) form a helical membrane-spanning segment. The Cytoplasmic portion of the chain corresponds to 126–141 (RYLAIVHPMKSRLRRT). Residues 142 to 165 (MLVAKVTCIIIWLMAGLASLPAVI) form a helical membrane-spanning segment. The Extracellular segment spans residues 166–190 (HRNVYFIENTNITVCAFHYESRNST). R167 is a binding site for angiotensin II. The N-linked (GlcNAc...) asparagine glycan is linked to N176. Angiotensin II is bound by residues F182, H183, and Y184. N-linked (GlcNAc...) asparagine glycosylation occurs at N188. A helical transmembrane segment spans residues 191–216 (LPIGLGLTKNILGFLFPFLIILTSYT). K199 lines the angiotensin II pocket. Over 217-239 (LIWKALKKAYEIQKNKPRNDDIF) the chain is Cytoplasmic. A helical membrane pass occupies residues 240 to 268 (RIIMAIVLFFFFSWVPHQIFTFLDVLIQL). Topologically, residues 269–278 (GVIHDCKISD) are extracellular. A helical transmembrane segment spans residues 279–304 (IVDTAMPITICIAYFNNCLNPLFYGF). Residues 305–359 (LGKKFKKYFLQLLKYIPPKAKSHSSLSTKMSTLSYRPSDNMSSSAKKPASCFEVE) are Cytoplasmic-facing. Residues 337–349 (LSYRPSDNMSSSA) show a composition bias toward polar residues. Residues 337–359 (LSYRPSDNMSSSAKKPASCFEVE) are disordered. The S-palmitoyl cysteine moiety is linked to residue C355.

It belongs to the G-protein coupled receptor 1 family. As to quaternary structure, interacts with MAS1. Interacts with ARRB1. Interacts with FLNA (via filamin repeat 21); increases PKA-mediated phosphorylation of FLNA. Post-translationally, C-terminal Ser or Thr residues may be phosphorylated. As to expression, is expressed in the liver, kidney, aorta, lung, uterus, ovary, spleen, heart, adrenal gland, and vascular smooth muscle cell.

The protein localises to the cell membrane. Receptor for angiotensin II, a vasoconstricting peptide, which acts as a key regulator of blood pressure and sodium retention by the kidney. The activated receptor in turn couples to G-alpha proteins G(q) (GNAQ, GNA11, GNA14 or GNA15) and thus activates phospholipase C and increases the cytosolic Ca(2+) concentrations, which in turn triggers cellular responses such as stimulation of protein kinase C. This Rattus norvegicus (Rat) protein is Type-1 angiotensin II receptor A (Agtr1).